The following is a 295-amino-acid chain: HTH-type transcriptional regulator TdfR (295 aa).

Positions M1–T58 constitute an HTH lysR-type domain. The segment at residues V18 to H37 is a DNA-binding region (H-T-H motif).

Belongs to the LysR transcriptional regulatory family.

The protein resides in the cytoplasm. In terms of biological role, involved in the regulation of 3-chlorocatechol degradation. Transcriptional regulator of tfdB expression. Acts as a repressor in the absence of its effector (either 2-cis-chlorodiene lactone or chloromaleylacetate) but acts as an activator when its effector is present. The polypeptide is HTH-type transcriptional regulator TdfR (tfdR) (Cupriavidus pinatubonensis (strain JMP 134 / LMG 1197) (Cupriavidus necator (strain JMP 134))).